Reading from the N-terminus, the 298-residue chain is tRNA dimethylallyltransferase (298 aa).

10-17 lines the ATP pocket; sequence GATATGKS. Substrate is bound at residue 12–17; sequence TATGKS. The tract at residues 35–38 is interaction with substrate tRNA; it reads DSRQ.

Belongs to the IPP transferase family. Monomer. Mg(2+) is required as a cofactor.

It catalyses the reaction adenosine(37) in tRNA + dimethylallyl diphosphate = N(6)-dimethylallyladenosine(37) in tRNA + diphosphate. Catalyzes the transfer of a dimethylallyl group onto the adenine at position 37 in tRNAs that read codons beginning with uridine, leading to the formation of N6-(dimethylallyl)adenosine (i(6)A). The chain is tRNA dimethylallyltransferase from Picosynechococcus sp. (strain ATCC 27264 / PCC 7002 / PR-6) (Agmenellum quadruplicatum).